Consider the following 222-residue polypeptide: Endonuclease V (222 aa).

Mg(2+) contacts are provided by Asp-34 and Asp-102.

It belongs to the endonuclease V family. Requires Mg(2+) as cofactor.

The protein localises to the cytoplasm. The enzyme catalyses Endonucleolytic cleavage at apurinic or apyrimidinic sites to products with a 5'-phosphate.. Functionally, DNA repair enzyme involved in the repair of deaminated bases. Selectively cleaves double-stranded DNA at the second phosphodiester bond 3' to a deoxyinosine leaving behind the intact lesion on the nicked DNA. In Photorhabdus laumondii subsp. laumondii (strain DSM 15139 / CIP 105565 / TT01) (Photorhabdus luminescens subsp. laumondii), this protein is Endonuclease V.